The following is a 149-amino-acid chain: Transcriptional repressor NrdR (149 aa).

A zinc finger lies at 3–34 (CPFCSENDTKVIDSRLVADGHQVRRRRQCLAC). Positions 49 to 139 (PKVIKSNGNR…VYRSFEDIRE (91 aa)) constitute an ATP-cone domain.

It belongs to the NrdR family. The cofactor is Zn(2+).

In terms of biological role, negatively regulates transcription of bacterial ribonucleotide reductase nrd genes and operons by binding to NrdR-boxes. This chain is Transcriptional repressor NrdR, found in Vibrio parahaemolyticus serotype O3:K6 (strain RIMD 2210633).